The primary structure comprises 640 residues: Threonine--tRNA ligase (640 aa).

One can recognise a TGS domain in the interval 1 to 61 (MPIITLPNGD…TEDSTLQIIT (61 aa)). Residues 242 to 533 (DHRKIGKALD…LIEHYAGFMP (292 aa)) form a catalytic region. Residues C333, H384, and H510 each contribute to the Zn(2+) site.

Belongs to the class-II aminoacyl-tRNA synthetase family. In terms of assembly, homodimer. Requires Zn(2+) as cofactor.

The protein resides in the cytoplasm. It catalyses the reaction tRNA(Thr) + L-threonine + ATP = L-threonyl-tRNA(Thr) + AMP + diphosphate + H(+). Catalyzes the attachment of threonine to tRNA(Thr) in a two-step reaction: L-threonine is first activated by ATP to form Thr-AMP and then transferred to the acceptor end of tRNA(Thr). Also edits incorrectly charged L-seryl-tRNA(Thr). This is Threonine--tRNA ligase from Acinetobacter baumannii (strain SDF).